Here is a 2475-residue protein sequence, read N- to C-terminus: Polyprotein pp220 (2475 aa).

Gly-2 carries the N-myristoyl glycine; by host lipid modification. The stretch at Arg-2184–Thr-2211 forms a coiled coil.

The protein belongs to the asfivirus polyprotein pp220 family. The polyprotein is not glycosylated. In terms of processing, specific enzymatic cleavages in vivo by the viral pS273R protease yield mature proteins.

It is found in the host cytoplasm. The protein localises to the host perinuclear region. Its subcellular location is the virion. The protein resides in the host nucleus. Its function is as follows. Essential for the core assembly. Its myristoyl moiety may function as a membrane-anchoring signal to bind the developing core shell to the inner viral envelope. Functionally, the structural protein p34 is a component of the virus core shell. The structural protein p14 is a component of the virus core shell. In terms of biological role, the structural protein p37 is a component of the virus core shell. Its function is as follows. The structural protein p150 is a component of the virus core shell. The protein is Polyprotein pp220 of African swine fever virus (isolate Warthog/Namibia/Wart80/1980) (ASFV).